Consider the following 269-residue polypeptide: Shikimate dehydrogenase (NADP(+)) (269 aa).

Residues 17 to 19 (SKS) and Thr64 each bind shikimate. Lys68 (proton acceptor) is an active-site residue. Asp80 serves as a coordination point for NADP(+). Residues Asn89 and Asp105 each contribute to the shikimate site. Residues 130 to 134 (GAGGA), 154 to 159 (NRTRAK), and Met213 contribute to the NADP(+) site. Tyr215 lines the shikimate pocket. Gly237 serves as a coordination point for NADP(+).

It belongs to the shikimate dehydrogenase family. In terms of assembly, homodimer.

It carries out the reaction shikimate + NADP(+) = 3-dehydroshikimate + NADPH + H(+). It functions in the pathway metabolic intermediate biosynthesis; chorismate biosynthesis; chorismate from D-erythrose 4-phosphate and phosphoenolpyruvate: step 4/7. Involved in the biosynthesis of the chorismate, which leads to the biosynthesis of aromatic amino acids. Catalyzes the reversible NADPH linked reduction of 3-dehydroshikimate (DHSA) to yield shikimate (SA). This chain is Shikimate dehydrogenase (NADP(+)), found in Neisseria meningitidis serogroup C (strain 053442).